Consider the following 71-residue polypeptide: Putative membrane protein insertion efficiency factor (71 aa).

The protein belongs to the UPF0161 family.

The protein localises to the cell membrane. Its function is as follows. Could be involved in insertion of integral membrane proteins into the membrane. The polypeptide is Putative membrane protein insertion efficiency factor (Clostridium acetobutylicum (strain ATCC 824 / DSM 792 / JCM 1419 / IAM 19013 / LMG 5710 / NBRC 13948 / NRRL B-527 / VKM B-1787 / 2291 / W)).